We begin with the raw amino-acid sequence, 158 residues long: Transcriptional repressor NrdR (158 aa).

Residues Met-1–Asn-22 are disordered. Residues Cys-3–Cys-34 fold into a zinc finger. Residues Thr-11–Asn-22 show a composition bias toward basic and acidic residues. The ATP-cone domain maps to Leu-49–Asp-139.

This sequence belongs to the NrdR family. The cofactor is Zn(2+).

Functionally, negatively regulates transcription of bacterial ribonucleotide reductase nrd genes and operons by binding to NrdR-boxes. The chain is Transcriptional repressor NrdR from Rhizobium etli (strain CIAT 652).